We begin with the raw amino-acid sequence, 395 residues long: Transcription termination/antitermination protein NusA (395 aa).

Positions 137–201 constitute an S1 motif domain; that stretch reads NSVLMGQVIL…TKKGLLLELS (65 aa). KH domains follow at residues 243–291 and 331–378; these read SHNA…TLAL and KVRL…NESE.

It belongs to the NusA family. In terms of assembly, monomer. Binds directly to the core enzyme of the DNA-dependent RNA polymerase and to nascent RNA.

It is found in the cytoplasm. Functionally, participates in both transcription termination and antitermination. This Helicobacter pylori (strain ATCC 700392 / 26695) (Campylobacter pylori) protein is Transcription termination/antitermination protein NusA.